Consider the following 499-residue polypeptide: Inosine-5'-monophosphate dehydrogenase (499 aa).

CBS domains are found at residues 106-165 (IDRE…SDAV) and 169-225 (MTDE…GSAA). Residues aspartate 260 and 308–310 (GIG) each bind NAD(+). Residues glycine 310 and glycine 312 each contribute to the K(+) site. An IMP-binding site is contributed by serine 313. K(+) is bound at residue cysteine 315. The active-site Thioimidate intermediate is the cysteine 315. IMP-binding positions include 348-350 (DGG), 371-372 (GS), and 395-399 (YRGMG). Catalysis depends on arginine 411, which acts as the Proton acceptor. Glutamate 425 provides a ligand contact to IMP. Glutamate 479, glycine 480, and histidine 481 together coordinate K(+). A disordered region spans residues 480-499 (GHPHDVMITDEAPNYSPQGE).

It belongs to the IMPDH/GMPR family. In terms of assembly, homotetramer. Requires K(+) as cofactor.

It catalyses the reaction IMP + NAD(+) + H2O = XMP + NADH + H(+). It participates in purine metabolism; XMP biosynthesis via de novo pathway; XMP from IMP: step 1/1. Mycophenolic acid (MPA) is a non-competitive inhibitor that prevents formation of the closed enzyme conformation by binding to the same site as the amobile flap. In contrast, mizoribine monophosphate (MZP) is a competitive inhibitor that induces the closed conformation. MPA is a potent inhibitor of mammalian IMPDHs but a poor inhibitor of the bacterial enzymes. MZP is a more potent inhibitor of bacterial IMPDH. In terms of biological role, catalyzes the conversion of inosine 5'-phosphate (IMP) to xanthosine 5'-phosphate (XMP), the first committed and rate-limiting step in the de novo synthesis of guanine nucleotides, and therefore plays an important role in the regulation of cell growth. The chain is Inosine-5'-monophosphate dehydrogenase from Halobacterium salinarum (strain ATCC 700922 / JCM 11081 / NRC-1) (Halobacterium halobium).